The sequence spans 447 residues: Asparagine--tRNA ligase (447 aa).

It belongs to the class-II aminoacyl-tRNA synthetase family. Homodimer.

The protein localises to the cytoplasm. It carries out the reaction tRNA(Asn) + L-asparagine + ATP = L-asparaginyl-tRNA(Asn) + AMP + diphosphate + H(+). In Lactococcus lactis subsp. lactis (strain IL1403) (Streptococcus lactis), this protein is Asparagine--tRNA ligase.